Reading from the N-terminus, the 102-residue chain is Large ribosomal subunit protein uL24 (102 aa).

The protein belongs to the universal ribosomal protein uL24 family. As to quaternary structure, part of the 50S ribosomal subunit.

Functionally, one of two assembly initiator proteins, it binds directly to the 5'-end of the 23S rRNA, where it nucleates assembly of the 50S subunit. One of the proteins that surrounds the polypeptide exit tunnel on the outside of the subunit. This is Large ribosomal subunit protein uL24 from Burkholderia ambifaria (strain ATCC BAA-244 / DSM 16087 / CCUG 44356 / LMG 19182 / AMMD) (Burkholderia cepacia (strain AMMD)).